Here is a 380-residue protein sequence, read N- to C-terminus: Kappa-type opioid receptor (380 aa).

The Extracellular portion of the chain corresponds to 1 to 57 (MESPIQIFRGDPGPTCSPSACLLPNSSSWFPNWAESDSNGSVGSEDQQLESAHISPA). Residues Asn-25 and Asn-39 are each glycosylated (N-linked (GlcNAc...) asparagine). The helical transmembrane segment at 58–85 (IPVIITAVYSVVFVVGLVGNSLVMFVII) threads the bilayer. At 86–95 (RYTKMKTATN) the chain is on the cytoplasmic side. A helical transmembrane segment spans residues 96-119 (IYIFNLALADALVTTTMPFQSAVY). At 120 to 132 (LMNSWPFGDVLCK) the chain is on the extracellular side. A disulfide bond links Cys-131 and Cys-210. A helical transmembrane segment spans residues 133–154 (IVISIDYYNMFTSIFTLTMMSV). At 155–173 (DRYIAVCHPVKALDFRTPL) the chain is on the cytoplasmic side. The chain crosses the membrane as a helical span at residues 174-196 (KAKIINICIWLLASSVGISAIVL). Residues 197-222 (GGTKVREDVDVIECSLQFPDDEYSWW) lie on the Extracellular side of the membrane. Residues 223 to 247 (DLFMKICVFVFAFVIPVLIIIVCYT) traverse the membrane as a helical segment. The Cytoplasmic portion of the chain corresponds to 248–274 (LMILRLKSVRLLSGSREKDRNLRRITK). A helical membrane pass occupies residues 275–296 (LVLVVVAVFIICWTPIHIFILV). Residues 297–311 (EALGSTSHSTAALSS) lie on the Extracellular side of the membrane. A helical membrane pass occupies residues 312–333 (YYFCIALGYTNSSLNPVLYAFL). Topologically, residues 334–380 (DENFKRCFRDFCFPIKMRMERQSTNRVRNTVQDPASMRDVGGMNKPV) are cytoplasmic. Cys-345 carries the S-palmitoyl cysteine lipid modification.

It belongs to the G-protein coupled receptor 1 family. In terms of assembly, interacts with NHERF1. Interacts with GABARAPL1. In terms of tissue distribution, detected in brain (at protein level). Brain (neocortex, hippocampus, amygdala, medial habenula, hypothalamus, locus ceruleus, and parabrachial nucleus).

It localises to the cell membrane. Functionally, G-protein coupled opioid receptor that functions as a receptor for endogenous alpha-neoendorphins and dynorphins, but has low affinity for beta-endorphins. Also functions as a receptor for various synthetic opioids and for the psychoactive diterpene salvinorin A. Ligand binding causes a conformation change that triggers signaling via guanine nucleotide-binding proteins (G proteins) and modulates the activity of down-stream effectors, such as adenylate cyclase. Signaling leads to the inhibition of adenylate cyclase activity. Inhibits neurotransmitter release by reducing calcium ion currents and increasing potassium ion conductance. Plays a role in the perception of pain. Plays a role in mediating reduced physical activity upon treatment with synthetic opioids. Plays a role in the regulation of salivation in response to synthetic opioids. May play a role in arousal and regulation of autonomic and neuroendocrine functions. In Mus musculus (Mouse), this protein is Kappa-type opioid receptor (Oprk1).